The chain runs to 537 residues: Autophagy-related protein 18 (537 aa).

Positions 184–230 are disordered; sequence SEYLDKGTEPLTDSSKAGADLNSVKASTETTISPGKEHSAGSGLNAT. Over residues 207-216 the composition is skewed to polar residues; that stretch reads VKASTETTIS. 2 WD repeats span residues 257–297 and 302–341; these read AHKG…KVYQ and TYPT…AENS. The L/FRRG motif motif lies at 298 to 302; sequence FRRGT. The span at 338-347 shows a compositional bias: low complexity; that stretch reads AENSSAAATN. Residues 338–411 are disordered; sequence AENSSAAATN…RMIRKSSQNL (74 aa). Residues 348–369 show a composition bias toward acidic residues; sequence SDDDEGEADSDDGADDDGVGDS. The segment covering 374 to 386 has biased composition (polar residues); sequence STVSIESFDNGSH. Basic and acidic residues predominate over residues 387–397; the sequence is QTREPIVDSSR.

This sequence belongs to the WD repeat PROPPIN family. As to quaternary structure, component of the PI(3,5)P2 regulatory complex.

The protein resides in the preautophagosomal structure membrane. The protein localises to the vacuole membrane. It is found in the endosome membrane. In terms of biological role, the PI(3,5)P2 regulatory complex regulates both the synthesis and turnover of phosphatidylinositol 3,5-bisphosphate (PtdIns(3,5)P2). Necessary for proper vacuole morphology. Plays an important role in osmotically-induced vacuole fragmentation. Required for cytoplasm to vacuole transport (Cvt) vesicle formation, pexophagy and starvation-induced autophagy. Involved in correct ATG9 trafficking to the pre-autophagosomal structure. Might also be involved in premeiotic DNA replication. This chain is Autophagy-related protein 18 (ATG18), found in Eremothecium gossypii (strain ATCC 10895 / CBS 109.51 / FGSC 9923 / NRRL Y-1056) (Yeast).